The chain runs to 740 residues: Ion-translocating oxidoreductase complex subunit C (740 aa).

2 4Fe-4S ferredoxin-type domains span residues 369-397 (GEPQ…QQLY) and 407-436 (KATT…VQYF). [4Fe-4S] cluster-binding residues include cysteine 377, cysteine 380, cysteine 383, cysteine 387, cysteine 416, cysteine 419, cysteine 422, and cysteine 426. Residues 602 to 716 (KLEQQQANAE…EPEEQVDPRK (115 aa)) form a disordered region.

It belongs to the 4Fe4S bacterial-type ferredoxin family. RnfC subfamily. The complex is composed of six subunits: RsxA, RsxB, RsxC, RsxD, RsxE and RsxG. It depends on [4Fe-4S] cluster as a cofactor.

The protein resides in the cell inner membrane. In terms of biological role, part of a membrane-bound complex that couples electron transfer with translocation of ions across the membrane. Required to maintain the reduced state of SoxR. In Escherichia coli (strain SE11), this protein is Ion-translocating oxidoreductase complex subunit C.